Here is a 287-residue protein sequence, read N- to C-terminus: Phosphatidylserine decarboxylase proenzyme (287 aa).

Catalysis depends on charge relay system; for autoendoproteolytic cleavage activity residues Asp90, His147, and Ser253. Ser253 (schiff-base intermediate with substrate; via pyruvic acid; for decarboxylase activity) is an active-site residue. The residue at position 253 (Ser253) is a Pyruvic acid (Ser); by autocatalysis.

It belongs to the phosphatidylserine decarboxylase family. PSD-B subfamily. Prokaryotic type I sub-subfamily. In terms of assembly, heterodimer of a large membrane-associated beta subunit and a small pyruvoyl-containing alpha subunit. It depends on pyruvate as a cofactor. Is synthesized initially as an inactive proenzyme. Formation of the active enzyme involves a self-maturation process in which the active site pyruvoyl group is generated from an internal serine residue via an autocatalytic post-translational modification. Two non-identical subunits are generated from the proenzyme in this reaction, and the pyruvate is formed at the N-terminus of the alpha chain, which is derived from the carboxyl end of the proenzyme. The autoendoproteolytic cleavage occurs by a canonical serine protease mechanism, in which the side chain hydroxyl group of the serine supplies its oxygen atom to form the C-terminus of the beta chain, while the remainder of the serine residue undergoes an oxidative deamination to produce ammonia and the pyruvoyl prosthetic group on the alpha chain. During this reaction, the Ser that is part of the protease active site of the proenzyme becomes the pyruvoyl prosthetic group, which constitutes an essential element of the active site of the mature decarboxylase.

The protein localises to the cell membrane. The enzyme catalyses a 1,2-diacyl-sn-glycero-3-phospho-L-serine + H(+) = a 1,2-diacyl-sn-glycero-3-phosphoethanolamine + CO2. It functions in the pathway phospholipid metabolism; phosphatidylethanolamine biosynthesis; phosphatidylethanolamine from CDP-diacylglycerol: step 2/2. In terms of biological role, catalyzes the formation of phosphatidylethanolamine (PtdEtn) from phosphatidylserine (PtdSer). The chain is Phosphatidylserine decarboxylase proenzyme from Aliivibrio fischeri (strain MJ11) (Vibrio fischeri).